Reading from the N-terminus, the 408-residue chain is Zinc-regulated transporter 1 (408 aa).

The next 3 membrane-spanning stretches (helical) occupy residues 64–84, 101–121, and 141–161; these read IGAIFVILATSLIGMNLPLVL, LFARYFGSGVILATAFIHLLA, and WAPGICLISCWFILLLEVLLN. A phosphothreonine mark is found at threonine 234 and threonine 237. The next 5 helical transmembrane spans lie at 254–274, 279–299, 315–335, 351–371, and 387–407; these read FIILESSIILHSVIIGLTTAV, FKTLFPVIIFHQAFEGCGLGS, WVLGVIYSLVTPIGMAAGLGV, GVLDAISSGILVYAGLVELLA, and LIYLLACSMAGTGVMALLGKW.

Belongs to the ZIP transporter (TC 2.A.5) family.

It localises to the endoplasmic reticulum membrane. Its function is as follows. High-affinity zinc transport protein. Regulates intracellular zinc levels. The protein is Zinc-regulated transporter 1 (zrt1) of Schizosaccharomyces pombe (strain 972 / ATCC 24843) (Fission yeast).